The following is a 283-amino-acid chain: Gap junction beta-1 protein (283 aa).

The Cytoplasmic segment spans residues 1 to 22; the sequence is MNWTGLYTLLSGVNRHSTAIGR. A helical membrane pass occupies residues 23 to 45; that stretch reads VWLSVIFIFRIMVLVVAAESVWG. Residues 46–75 are Extracellular-facing; the sequence is DEKSSFICNTLQPGCNSVCYDHFFPISHVR. A helical transmembrane segment spans residues 76–95; that stretch reads LWSLQLILVSTPALLVAMHV. Residues 96 to 130 lie on the Cytoplasmic side of the membrane; it reads AHQQHIEKKMLRLEGHGDPLHLEEVKRHKVHISGT. A helical transmembrane segment spans residues 131–153; that stretch reads LWWTYVISVVFRLLFEAVFMYVF. The Extracellular segment spans residues 154-191; it reads YLLYPGYAMVRLVKCEAFPCPNTVDCFVSRPTEKTVFT. A helical transmembrane segment spans residues 192-214; sequence VFMLAASGICIILNVAEVVYLII. Over 215–283 the chain is Cytoplasmic; sequence RACARRAQRR…AEKSDRCSAC (69 aa). Residues serine 233, serine 258, serine 266, and serine 277 each carry the phosphoserine modification.

This sequence belongs to the connexin family. Beta-type (group I) subfamily. As to quaternary structure, a connexon is composed of a hexamer of connexins. Interacts with CNST.

It is found in the cell membrane. It localises to the cell junction. Its subcellular location is the gap junction. In terms of biological role, one gap junction consists of a cluster of closely packed pairs of transmembrane channels, the connexons, through which materials of low MW diffuse from one cell to a neighboring cell. This is Gap junction beta-1 protein (Gjb1) from Mus musculus (Mouse).